The chain runs to 152 residues: Early glycoprotein GP48 (152 aa).

The N-terminal stretch at 1 to 25 (MVMMLRTWRLLPMVLLAAYCYCVFG) is a signal peptide. N-linked (GlcNAc...) asparagine; by host glycans are attached at residues N48, N53, N61, N69, N108, N112, N122, N139, and N148.

The protein belongs to the RL11 family. N-glycosylated and possibly O-glycosylated.

The protein localises to the virion membrane. The sequence is that of Early glycoprotein GP48 (UL4) from Homo sapiens (Human).